A 389-amino-acid chain; its full sequence is Na(+)/H(+) antiporter NhaA (389 aa).

11 consecutive transmembrane segments (helical) span residues 17–37 (ILLLVAVVLAMLMANSPLAGL), 59–79 (LLLWINDGLMALFFLLIGLEV), 95–115 (SLPTFAAIGGMLVPAGIYLLF), 124–144 (VGWAIPAATDIAFALGIMALL), 154–174 (VFLLALAIIDDLGVIVIIALF), 177–197 (SDLSTISLIIASIAIVGLVAL), 213–233 (LVLWVAVLKSGVHATLAGVII), 261–281 (FLILPVFAFANAGVALGNMSL), 287–307 (PVPVGIALGLMLGKPIGVMLF), 328–348 (IAPVAAMCGIGFTMSMFIASL), and 363–383 (LGTLIGSILAALIGYFWLSKV).

Belongs to the NhaA Na(+)/H(+) (TC 2.A.33) antiporter family.

It localises to the cell inner membrane. The enzyme catalyses Na(+)(in) + 2 H(+)(out) = Na(+)(out) + 2 H(+)(in). Functionally, na(+)/H(+) antiporter that extrudes sodium in exchange for external protons. This chain is Na(+)/H(+) antiporter NhaA, found in Shewanella sp. (strain ANA-3).